The sequence spans 263 residues: Hydroxyethylthiazole kinase (263 aa).

Position 41 (Met41) interacts with substrate. Positions 117 and 163 each coordinate ATP. Residue Ala190 coordinates substrate.

It belongs to the Thz kinase family. Mg(2+) is required as a cofactor.

The catalysed reaction is 5-(2-hydroxyethyl)-4-methylthiazole + ATP = 4-methyl-5-(2-phosphooxyethyl)-thiazole + ADP + H(+). It functions in the pathway cofactor biosynthesis; thiamine diphosphate biosynthesis; 4-methyl-5-(2-phosphoethyl)-thiazole from 5-(2-hydroxyethyl)-4-methylthiazole: step 1/1. In terms of biological role, catalyzes the phosphorylation of the hydroxyl group of 4-methyl-5-beta-hydroxyethylthiazole (THZ). The polypeptide is Hydroxyethylthiazole kinase (Haemophilus influenzae (strain PittEE)).